The primary structure comprises 157 residues: 3-dehydroquinate dehydratase (157 aa).

Tyr24 (proton acceptor) is an active-site residue. 3 residues coordinate substrate: Asn75, His81, and Asp88. Catalysis depends on His101, which acts as the Proton donor. Substrate is bound by residues 102 to 103 and Arg112; that span reads LS.

The protein belongs to the type-II 3-dehydroquinase family. As to quaternary structure, homododecamer.

The enzyme catalyses 3-dehydroquinate = 3-dehydroshikimate + H2O. It participates in metabolic intermediate biosynthesis; chorismate biosynthesis; chorismate from D-erythrose 4-phosphate and phosphoenolpyruvate: step 3/7. In terms of biological role, catalyzes a trans-dehydration via an enolate intermediate. The polypeptide is 3-dehydroquinate dehydratase (Brucella canis (strain ATCC 23365 / NCTC 10854 / RM-666)).